Here is an 837-residue protein sequence, read N- to C-terminus: Outer membrane usher protein HifC (837 aa).

The N-terminal stretch at Met1–Ala26 is a signal peptide. A disulfide bond links Cys813 and Cys833.

Belongs to the fimbrial export usher family.

Its subcellular location is the cell outer membrane. Functionally, essential for piliation. The sequence is that of Outer membrane usher protein HifC (hifC) from Haemophilus influenzae.